Reading from the N-terminus, the 432-residue chain is Serine hydroxymethyltransferase (432 aa).

(6S)-5,6,7,8-tetrahydrofolate is bound by residues L131 and 135–137 (GHL). K240 is subject to N6-(pyridoxal phosphate)lysine.

The protein belongs to the SHMT family. In terms of assembly, homodimer. The cofactor is pyridoxal 5'-phosphate.

The protein localises to the cytoplasm. It carries out the reaction (6R)-5,10-methylene-5,6,7,8-tetrahydrofolate + glycine + H2O = (6S)-5,6,7,8-tetrahydrofolate + L-serine. The protein operates within one-carbon metabolism; tetrahydrofolate interconversion. It participates in amino-acid biosynthesis; glycine biosynthesis; glycine from L-serine: step 1/1. Catalyzes the reversible interconversion of serine and glycine with tetrahydrofolate (THF) serving as the one-carbon carrier. This reaction serves as the major source of one-carbon groups required for the biosynthesis of purines, thymidylate, methionine, and other important biomolecules. Also exhibits THF-independent aldolase activity toward beta-hydroxyamino acids, producing glycine and aldehydes, via a retro-aldol mechanism. This is Serine hydroxymethyltransferase from Acidiphilium cryptum (strain JF-5).